We begin with the raw amino-acid sequence, 410 residues long: Cysteine desulfurase IscS (410 aa).

Pyridoxal 5'-phosphate-binding positions include 80–81 (AT), asparagine 160, glutamine 188, and 208–210 (SGH). Lysine 211 carries the N6-(pyridoxal phosphate)lysine modification. Threonine 248 is a binding site for pyridoxal 5'-phosphate. Cysteine 334 (cysteine persulfide intermediate) is an active-site residue. Cysteine 334 contacts [2Fe-2S] cluster.

Belongs to the class-V pyridoxal-phosphate-dependent aminotransferase family. NifS/IscS subfamily. As to quaternary structure, homodimer. Forms a heterotetramer with IscU, interacts with other sulfur acceptors. It depends on pyridoxal 5'-phosphate as a cofactor.

The protein resides in the cytoplasm. It catalyses the reaction (sulfur carrier)-H + L-cysteine = (sulfur carrier)-SH + L-alanine. The protein operates within cofactor biosynthesis; iron-sulfur cluster biosynthesis. In terms of biological role, master enzyme that delivers sulfur to a number of partners involved in Fe-S cluster assembly, tRNA modification or cofactor biosynthesis. Catalyzes the removal of elemental sulfur atoms from cysteine to produce alanine. Functions as a sulfur delivery protein for Fe-S cluster synthesis onto IscU, an Fe-S scaffold assembly protein, as well as other S acceptor proteins. In Rickettsia peacockii (strain Rustic), this protein is Cysteine desulfurase IscS.